The following is a 175-amino-acid chain: Ribosome maturation factor RimM (175 aa).

One can recognise a PRC barrel domain in the interval 93 to 167; the sequence is DDEFYYSDLI…YIIITLPEVI (75 aa).

It belongs to the RimM family. Binds ribosomal protein uS19.

It is found in the cytoplasm. Functionally, an accessory protein needed during the final step in the assembly of 30S ribosomal subunit, possibly for assembly of the head region. Essential for efficient processing of 16S rRNA. May be needed both before and after RbfA during the maturation of 16S rRNA. It has affinity for free ribosomal 30S subunits but not for 70S ribosomes. The polypeptide is Ribosome maturation factor RimM (Ehrlichia chaffeensis (strain ATCC CRL-10679 / Arkansas)).